The sequence spans 633 residues: Sodium- and chloride-dependent glycine transporter 1 (633 aa).

At 1–30 (MGLCVNGAVPSEATKKDENLKRGNWGNQIE) the chain is on the cytoplasmic side. 3 helical membrane-spanning segments follow: residues 31-51 (FVLT…FPYL), 58-78 (GAFM…LFFM), and 113-133 (YIGI…FASM). Topologically, residues 134–208 (NRVLPWTYCN…ISEDIGDFGE (75 aa)) are extracellular. Asparagine 158, asparagine 164, asparagine 173, and asparagine 179 each carry an N-linked (GlcNAc...) asparagine glycan. A run of 9 helical transmembrane segments spans residues 209 to 229 (VQLP…LCLI), 238 to 258 (VVYF…IRGI), 283 to 303 (VWGD…GGLI), 330 to 350 (SVYA…HLGV), 373 to 393 (LLPI…LLGL), 429 to 449 (IIGF…WLLL), 453 to 473 (YAAS…VMYI), 493 to 513 (LFFQ…ILIF), and 533 to 553 (ITIG…YAIF). Topologically, residues 554–633 (KIWCSEGDTF…GQAHTQDSKV (80 aa)) are cytoplasmic. The disordered stretch occupies residues 588 to 633 (RYAQMSSTRSESNPEAQPLNPEKMKEDLSLTIQGSNGQAHTQDSKV). Polar residues-rich tracts occupy residues 591-602 (QMSSTRSESNPE) and 617-633 (LTIQ…DSKV).

It belongs to the sodium:neurotransmitter symporter (SNF) (TC 2.A.22) family. SLC6A9 subfamily. As to expression, first expressed in early tailbud stage embryos in the midbrain and anterior spinal cord, and weakly in the hindbrain. By late tailbud stages, expression extends posteriorly in the spinal cord to appear in between somites. Expressed in the forebrain, retina, between the somites and in the blood islands by the swimming tadpole stages.

It localises to the cell membrane. The catalysed reaction is glycine(out) + chloride(out) + 2 Na(+)(out) = glycine(in) + chloride(in) + 2 Na(+)(in). Functionally, sodium- and chloride-dependent glycine transporter which is essential for regulating glycine concentrations at inhibitory glycinergic synapses. This Xenopus laevis (African clawed frog) protein is Sodium- and chloride-dependent glycine transporter 1.